The sequence spans 334 residues: Probable fructose-bisphosphate aldolase class 1 (334 aa).

The protein belongs to the class I fructose-bisphosphate aldolase family.

The catalysed reaction is beta-D-fructose 1,6-bisphosphate = D-glyceraldehyde 3-phosphate + dihydroxyacetone phosphate. It functions in the pathway carbohydrate degradation; glycolysis; D-glyceraldehyde 3-phosphate and glycerone phosphate from D-glucose: step 4/4. In Xylella fastidiosa (strain 9a5c), this protein is Probable fructose-bisphosphate aldolase class 1.